We begin with the raw amino-acid sequence, 129 residues long: Glycine cleavage system H protein (129 aa).

Residues 24 to 106 (LFKIGVSEFA…IGDGWLLIIK (83 aa)) enclose the Lipoyl-binding domain. The residue at position 65 (Lys65) is an N6-lipoyllysine.

It belongs to the GcvH family. In terms of assembly, the glycine cleavage system is composed of four proteins: P, T, L and H. (R)-lipoate serves as cofactor.

Its function is as follows. The glycine cleavage system catalyzes the degradation of glycine. The H protein shuttles the methylamine group of glycine from the P protein to the T protein. The chain is Glycine cleavage system H protein from Prochlorococcus marinus subsp. pastoris (strain CCMP1986 / NIES-2087 / MED4).